The following is a 430-amino-acid chain: MDHRLLSFISAPLPSLIASLARHGGFGAWFVGGCVRDALLARPSNDIDIVVGPGGEDLPRAVAARIGGSFFPLDEERGHARVVLKGEGASCDFAPLQGGTIAADLALRDFTINALAVSCGSDDLLDPLGGAADLAQRVIRACSAGAFAADPLRIVRAYRFAAHLDFEIHAATLALIPDHAPLLATVAGERIRDELFRMLDLPHAVPYVLKMSCAGVTGAIFGADDLPADTAAGALDRVESLCRDLSAFGTEAEPVRARLRQEVQPGITIRALAKLAAFLNGAGIPAGIASQRLMLGKAATRLLELLCSSARLTWPAPAAAPDPHALFTLFCHREPAGCEQLILPLAEGILPEDRCRHLAAYLTRQHIPRGGRLLLTGDDIMILLGLPPGRQVGEAIELLRAAQSTGEVRTRAEAQRYLAKKQLTTPEPLR.

33–36 is a CTP binding site; it reads GCVR. Mg(2+) contacts are provided by Asp46 and Asp48. Residues 108-109, Asn113, 150-159, and Arg190 contribute to the CTP site; these read RD and DPLRIVRAYR.

This sequence belongs to the tRNA nucleotidyltransferase/poly(A) polymerase family. It depends on Mg(2+) as a cofactor.

It carries out the reaction a tRNA precursor + 2 CTP = a tRNA with a 3' CC end + 2 diphosphate. In terms of biological role, tRNA nucleotidyltransferase involved in the synthesis of the tRNA CCA terminus. Adds the two cytidine residues to tRNA. The polypeptide is CC-adding tRNA nucleotidyltransferase (Geobacter sulfurreducens (strain ATCC 51573 / DSM 12127 / PCA)).